A 1358-amino-acid polypeptide reads, in one-letter code: DNA-directed RNA polymerase subunit beta (1358 aa).

The protein belongs to the RNA polymerase beta chain family. As to quaternary structure, the RNAP catalytic core consists of 2 alpha, 1 beta, 1 beta' and 1 omega subunit. When a sigma factor is associated with the core the holoenzyme is formed, which can initiate transcription.

It catalyses the reaction RNA(n) + a ribonucleoside 5'-triphosphate = RNA(n+1) + diphosphate. Its function is as follows. DNA-dependent RNA polymerase catalyzes the transcription of DNA into RNA using the four ribonucleoside triphosphates as substrates. The polypeptide is DNA-directed RNA polymerase subunit beta (Xanthobacter autotrophicus (strain ATCC BAA-1158 / Py2)).